The primary structure comprises 38 residues: LECKDLGISIDDDNNRRLAVKEGDPLVVQFVNADREGN.

Belongs to the protease inhibitor I3 (leguminous Kunitz-type inhibitor) family. As to quaternary structure, heterodimer of an alpha and a beta chain linked by a disulfide bond.

Inhibition of trypsin. The chain is Trypsin inhibitor DE5 beta chain from Adenanthera pavonina (Sandal bead tree).